A 220-amino-acid polypeptide reads, in one-letter code: Adenylate kinase (220 aa).

Position 12–17 (12–17) interacts with ATP; that stretch reads GAGKGT. The tract at residues 32–62 is NMP; sequence STGDIFRDIVKKENDELGKKIKEIMERGELV. Residues Thr33, Arg38, 60-62, 88-91, and Gln95 contribute to the AMP site; these read ELV and GYPR. An LID region spans residues 129–166; that stretch reads ARRICPKCGRIYNLISLPPKEDELCDDCKVKLVQREDD. ATP is bound at residue Arg130. Zn(2+)-binding residues include Cys133 and Cys136. 139–140 serves as a coordination point for ATP; the sequence is IY. The Zn(2+) site is built by Cys153 and Cys156. 2 residues coordinate AMP: Arg163 and Arg174. ATP is bound at residue Ile202.

Belongs to the adenylate kinase family. In terms of assembly, monomer.

It localises to the cytoplasm. It catalyses the reaction AMP + ATP = 2 ADP. It functions in the pathway purine metabolism; AMP biosynthesis via salvage pathway; AMP from ADP: step 1/1. Catalyzes the reversible transfer of the terminal phosphate group between ATP and AMP. Plays an important role in cellular energy homeostasis and in adenine nucleotide metabolism. The protein is Adenylate kinase of Thermotoga petrophila (strain ATCC BAA-488 / DSM 13995 / JCM 10881 / RKU-1).